A 56-amino-acid chain; its full sequence is Large ribosomal subunit protein bL33 (56 aa).

Basic and acidic residues predominate over residues 1 to 12 (MASKGGRDKIKL). The disordered stretch occupies residues 1 to 28 (MASKGGRDKIKLESTAGTGHFYTTTKNK). The span at 15-25 (TAGTGHFYTTT) shows a compositional bias: polar residues.

Belongs to the bacterial ribosomal protein bL33 family.

In Cupriavidus necator (strain ATCC 17699 / DSM 428 / KCTC 22496 / NCIMB 10442 / H16 / Stanier 337) (Ralstonia eutropha), this protein is Large ribosomal subunit protein bL33.